A 189-amino-acid chain; its full sequence is Glucose-6-phosphate isomerase (189 aa).

Fe cation is bound by residues His-88, His-90, Glu-97, and His-136.

This sequence belongs to the archaeal-type GPI family. Homodimer. Fe cation is required as a cofactor.

Its subcellular location is the cytoplasm. The enzyme catalyses alpha-D-glucose 6-phosphate = beta-D-fructose 6-phosphate. Its pathway is carbohydrate degradation; glycolysis; D-glyceraldehyde 3-phosphate and glycerone phosphate from D-glucose: step 2/4. This Pyrococcus horikoshii (strain ATCC 700860 / DSM 12428 / JCM 9974 / NBRC 100139 / OT-3) protein is Glucose-6-phosphate isomerase (pgiA).